Reading from the N-terminus, the 326-residue chain is Ribonuclease Z (326 aa).

Zn(2+) contacts are provided by His-62, His-64, Asp-66, His-67, His-140, Asp-211, and His-269. Residue Asp-66 is the Proton acceptor of the active site.

It belongs to the RNase Z family. In terms of assembly, homodimer. Zn(2+) serves as cofactor.

It catalyses the reaction Endonucleolytic cleavage of RNA, removing extra 3' nucleotides from tRNA precursor, generating 3' termini of tRNAs. A 3'-hydroxy group is left at the tRNA terminus and a 5'-phosphoryl group is left at the trailer molecule.. Zinc phosphodiesterase, which displays some tRNA 3'-processing endonuclease activity. Probably involved in tRNA maturation, by removing a 3'-trailer from precursor tRNA. The sequence is that of Ribonuclease Z from Synechocystis sp. (strain ATCC 27184 / PCC 6803 / Kazusa).